The sequence spans 274 residues: 2,3,4,5-tetrahydropyridine-2,6-dicarboxylate N-succinyltransferase (274 aa).

Arginine 104 and aspartate 141 together coordinate substrate.

Belongs to the transferase hexapeptide repeat family. As to quaternary structure, homotrimer.

The protein resides in the cytoplasm. The catalysed reaction is (S)-2,3,4,5-tetrahydrodipicolinate + succinyl-CoA + H2O = (S)-2-succinylamino-6-oxoheptanedioate + CoA. It functions in the pathway amino-acid biosynthesis; L-lysine biosynthesis via DAP pathway; LL-2,6-diaminopimelate from (S)-tetrahydrodipicolinate (succinylase route): step 1/3. The polypeptide is 2,3,4,5-tetrahydropyridine-2,6-dicarboxylate N-succinyltransferase (Shewanella sp. (strain ANA-3)).